A 571-amino-acid chain; its full sequence is Penicillin-binding protein activator LpoA (571 aa).

An N-terminal signal peptide occupies residues 1 to 26; the sequence is MMTILLQHTHLKNRLMPFLLALFLAG. C27 carries N-palmitoyl cysteine lipidation. A lipid anchor (S-diacylglycerol cysteine) is attached at C27.

Belongs to the LpoA family. Interacts with PBP1a.

It is found in the cell outer membrane. In terms of biological role, regulator of peptidoglycan synthesis that is essential for the function of penicillin-binding protein 1A (PBP1a). The polypeptide is Penicillin-binding protein activator LpoA (Pasteurella multocida (strain Pm70)).